Here is a 386-residue protein sequence, read N- to C-terminus: Alanine racemase (386 aa).

Residue K38 is the Proton acceptor; specific for D-alanine of the active site. K38 bears the N6-(pyridoxal phosphate)lysine mark. R136 lines the substrate pocket. The active-site Proton acceptor; specific for L-alanine is Y267. Residue M315 coordinates substrate.

Belongs to the alanine racemase family. The cofactor is pyridoxal 5'-phosphate.

The catalysed reaction is L-alanine = D-alanine. Its pathway is amino-acid biosynthesis; D-alanine biosynthesis; D-alanine from L-alanine: step 1/1. Catalyzes the interconversion of L-alanine and D-alanine. May also act on other amino acids. This is Alanine racemase (alr) from Clostridium perfringens (strain SM101 / Type A).